The primary structure comprises 495 residues: MPTESGSWAAARQTKQKRKSHSLSIKRTNSSEQDRLGLQRDMLEGQDSKLPPSVRNTLLELFGQIEREFENLYLENLELRREIDTLNDRLAVEGQAIDGAELSKGQMKTKASHSTSQLSQKLKTTYKASTSKIVSSFKTTTSRAICQLVKDYVGHRDGLWDVSVTRTQPVVLGTASADHTALLWSIETGKCLIKYVGHAGSVNSIKFHPTEQIALTASGDQTAHIWRYMVQLPTPQPMADTSQISGEEEVDFSDKDENDGDGDASSDCPTVRVPLTALKSHQGVVIAADWLVGGKQAVTASWDRTANLYDVETSELVHSLTGHDQELTHCCTHPTQRLVVTSSRDTTFRLWDFRDPSIHSVNVFQGHTDTVTSAVFTVGDNVVSGSDDRTVKVWDLKNMRSPIATIRTDSAVNRISVSVGQRIIALPHDNRQVRLFDISGVRLARLPRSNRQGHRRMVCCCAWSEDHPTCNLFSCGFDRQAIGWNINIPALLQEK.

The interval 1–34 is disordered; sequence MPTESGSWAAARQTKQKRKSHSLSIKRTNSSEQD. The span at 22–31 shows a compositional bias: polar residues; sequence SLSIKRTNSS. WD repeat units follow at residues 154 to 194 and 197 to 236; these read GHRD…CLIK and GHAGSVNSIKFHPTEQIALTASGDQTAHIWRYMVQLPTPQ. The segment at 237-268 is disordered; that stretch reads PMADTSQISGEEEVDFSDKDENDGDGDASSDC. Residues 246-264 show a composition bias toward acidic residues; the sequence is GEEEVDFSDKDENDGDGDA. WD repeat units lie at residues 280–319, 322–361, 366–404, 407–446, and 453–494; these read SHQGVVIAADWLVGGKQAVTASWDRTANLYDVETSELVHS, GHDQELTHCCTHPTQRLVVTSSRDTTFRLWDFRDPSIHSV, GHTDTVTSAVFTVGDNVVSGSDDRTVKVWDLKNMRSPIA, RTDSAVNRISVSVGQRIIALPHDNRQVRLFDISGVRLARL, and GHRR…LLQE.

The protein resides in the cytoplasm. It localises to the nucleus. The chain is WD repeat-containing protein 37 (wdr37) from Xenopus laevis (African clawed frog).